The primary structure comprises 37 residues: Large ribosomal subunit protein bL36c (37 aa).

The protein belongs to the bacterial ribosomal protein bL36 family.

It is found in the plastid. The protein resides in the chloroplast. The protein is Large ribosomal subunit protein bL36c of Pelargonium hortorum (Common geranium).